The primary structure comprises 387 residues: Beta-alanyl-dopamine/carcinine hydrolase (387 aa).

The protein belongs to the peptidase C45 family. In terms of assembly, the unprocessed protein forms homodimers. May form heterodimers composed of a 15 kDa alpha subunit and a 30 kDa beta subunit. In terms of processing, the protein is synthesized as a 43 kDa precursor which is then self-processed into a 15 kDa alpha subunit and a 30 kDa beta subunit. Processing appears to be necessary for beta-alanyl-dopamine/carcinine hydrolase activity. The beta subunit carries the beta-alanyl-dopamine/carcinine hydrolase activity. Expressed in body, head, optic lobes and retina (at protein level). Expressed in photoreceptor cells R1-R6 in the lamina and in photoreceptor cells R7 and R8 in the medulla (at protein level).

It is found in the cell projection. Its subcellular location is the axon. The protein localises to the cytoplasm. It carries out the reaction carcinine + H2O = histamine + beta-alanine. The enzyme catalyses beta-alanyl-dopamine + H2O = dopamine + beta-alanine. In terms of biological role, in the cuticle, catalyzes the hydrolysis of beta-alanyl-dopamine releasing dopamine and beta-alanine; dopamine is a metabolite involved in the pigmentation and sclerotization of the insect cuticle. In the photoreceptor cells, catalyzes the hydrolysis of carcinine releasing histamine and beta-alanine contributing to the recycling of the neurotransmitter histamine in the optical nerve system. Also, regulates the cuticular hydrocarbon composition in females. This is Beta-alanyl-dopamine/carcinine hydrolase from Drosophila melanogaster (Fruit fly).